A 474-amino-acid chain; its full sequence is Chromosomal replication initiator protein DnaA (474 aa).

The domain I, interacts with DnaA modulators stretch occupies residues 1–73 (MTNIEQERWS…LSCWQAEMPE (73 aa)). A domain II region spans residues 73 to 130 (EVHRIDLTVRTAMRCAAPAKEQAAPIEPRREDNRAAAHDLRVSATAPVSANHEALGGS). The segment at 131–353 (PLDPRLTFSS…GAINRLLAHS (223 aa)) is domain III, AAA+ region. ATP contacts are provided by glycine 178, glycine 180, lysine 181, and threonine 182. Residues 354-474 (KLNAQPVTLE…VESLKRQLQE (121 aa)) are domain IV, binds dsDNA.

It belongs to the DnaA family. As to quaternary structure, oligomerizes as a right-handed, spiral filament on DNA at oriC.

It is found in the cytoplasm. Functionally, plays an essential role in the initiation and regulation of chromosomal replication. ATP-DnaA binds to the origin of replication (oriC) to initiate formation of the DNA replication initiation complex once per cell cycle. Binds the DnaA box (a 9 base pair repeat at the origin) and separates the double-stranded (ds)DNA. Forms a right-handed helical filament on oriC DNA; dsDNA binds to the exterior of the filament while single-stranded (ss)DNA is stabiized in the filament's interior. The ATP-DnaA-oriC complex binds and stabilizes one strand of the AT-rich DNA unwinding element (DUE), permitting loading of DNA polymerase. After initiation quickly degrades to an ADP-DnaA complex that is not apt for DNA replication. Binds acidic phospholipids. The sequence is that of Chromosomal replication initiator protein DnaA from Rhodopseudomonas palustris (strain BisA53).